Consider the following 161-residue polypeptide: Nucleotide-binding protein Bpro_1596 (161 aa).

Belongs to the YajQ family.

Nucleotide-binding protein. In Polaromonas sp. (strain JS666 / ATCC BAA-500), this protein is Nucleotide-binding protein Bpro_1596.